The chain runs to 147 residues: Myoglobin (147 aa).

In terms of domain architecture, Globin spans 2–141; that stretch reads ADFDMVLKCW…IIADMEADYK (140 aa). Histidine 60 provides a ligand contact to nitrite. Histidine 60 is an O2 binding site. Histidine 89 serves as a coordination point for heme b.

Belongs to the globin family. As to quaternary structure, monomeric.

Its subcellular location is the cytoplasm. It is found in the sarcoplasm. It carries out the reaction Fe(III)-heme b-[protein] + nitric oxide + H2O = Fe(II)-heme b-[protein] + nitrite + 2 H(+). It catalyses the reaction H2O2 + AH2 = A + 2 H2O. Its function is as follows. Monomeric heme protein which primary function is to store oxygen and facilitate its diffusion within muscle tissues. Reversibly binds oxygen through a pentacoordinated heme iron and enables its timely and efficient release as needed during periods of heightened demand. Depending on the oxidative conditions of tissues and cells, and in addition to its ability to bind oxygen, it also has a nitrite reductase activity whereby it regulates the production of bioactive nitric oxide. Under stress conditions, like hypoxia and anoxia, it also protects cells against reactive oxygen species thanks to its pseudoperoxidase activity. In Gobionotothen gibberifrons (Humped rockcod), this protein is Myoglobin (mb).